A 184-amino-acid polypeptide reads, in one-letter code: Dual specificity protein phosphatase 22 (184 aa).

G2 carries N-myristoyl glycine lipidation. The Tyrosine-protein phosphatase domain maps to 4-144 (GMNKILPGLY…LQEFEKHEVH (141 aa)). Phosphoserine is present on S58. Residue C88 is the Phosphocysteine intermediate of the active site. A protein-binding residues include L89, A90, V92, S93, and R94.

The protein belongs to the protein-tyrosine phosphatase family. Non-receptor class dual specificity subfamily. Monomer. Interacts with LCK; the interaction is direct. Interacts with UBR2; the interaction is direct. Myristoylation regulates subcellular location, and is necessary for activation of JNK. In terms of tissue distribution, ubiquitous. Highest expression seen in heart, placenta, lung, liver, kidney and pancreas.

The protein resides in the cytoplasm. The catalysed reaction is O-phospho-L-tyrosyl-[protein] + H2O = L-tyrosyl-[protein] + phosphate. It carries out the reaction O-phospho-L-seryl-[protein] + H2O = L-seryl-[protein] + phosphate. The enzyme catalyses O-phospho-L-threonyl-[protein] + H2O = L-threonyl-[protein] + phosphate. Functionally, dual specificity phosphatase; can dephosphorylate both phosphotyrosine and phosphoserine or phosphothreonine residues. Activates the JNK signaling pathway. Inhibits T-cell receptor signaling and T-cell mediated immune responses, acting, at least in part, by inducing degradation of E3 ubiquitin ligase UBR2. Dephosphorylates and thereby induces 'Lys-48'-linked ubiquitination of UBR2, leading to proteasomal degradation of UBR2. Dephosphorylates and thereby inactivates tyrosine kinase LCK. Inhibits UBR2-mediated 'Lys-63'-linked ubiquitination of LCK. May play a role in B-cell receptor (BCR) signaling and B-cell function. The polypeptide is Dual specificity protein phosphatase 22 (DUSP22) (Homo sapiens (Human)).